We begin with the raw amino-acid sequence, 134 residues long: Profilin-3 (134 aa).

A disulfide bridge connects residues cysteine 13 and cysteine 118. Residues 84-100 (AVIRGKKGSGGITIKKT) carry the Involved in PIP2 interaction motif.

It belongs to the profilin family. Occurs in many kinds of cells as a complex with monomeric actin in a 1:1 ratio. Post-translationally, phosphorylated by MAP kinases.

The protein localises to the cytoplasm. It localises to the cytoskeleton. Functionally, binds to actin and affects the structure of the cytoskeleton. At high concentrations, profilin prevents the polymerization of actin, whereas it enhances it at low concentrations. This chain is Profilin-3, found in Olea europaea (Common olive).